Reading from the N-terminus, the 776-residue chain is Ent-8-alpha-hydroxylabd-13-en-15-yl diphosphate synthase CPS4, chloroplastic (776 aa).

The transit peptide at 1–60 (MSFASNATGFRIPLTTCVYPSPILRFNAKVGSGSSYGTTEAQRNMKCVDGIGRSRVVAVA) directs the protein to the chloroplast. Residue Lys-226 participates in substrate binding. Positions 357 and 359 each coordinate Mg(2+). The short motif at 357–360 (DSDD) is the DXDD motif element. Position 443 (Lys-443) interacts with substrate.

Belongs to the terpene synthase family. The cofactor is Mg(2+).

It localises to the plastid. The protein resides in the chloroplast. It carries out the reaction ent-8alpha-hydroxylabd-13-en-15-yl diphosphate = (2E,6E,10E)-geranylgeranyl diphosphate + H2O. The protein operates within secondary metabolite biosynthesis; terpenoid biosynthesis. In terms of biological role, involved in diterpenoid biosynthesis. Catalyzes the conversion of all-trans-geranylgeranyl diphosphate to ent-8alpha-hydroxylabd-13-en-15-yl diphosphate. The sequence is that of Ent-8-alpha-hydroxylabd-13-en-15-yl diphosphate synthase CPS4, chloroplastic from Salvia miltiorrhiza (Chinese sage).